Consider the following 259-residue polypeptide: Cytochrome c oxidase subunit 3 (259 aa).

The next 7 helical transmembrane spans lie at 13–33 (PWPL…TSWF), 36–56 (HGFI…FQWW), 80–100 (GMVL…WAYF), 125–145 (FQIP…VTWA), 154–174 (HAEA…FTLL), 195–215 (FFVA…FLLI), and 237–257 (AWYW…IYWW).

The protein belongs to the cytochrome c oxidase subunit 3 family. Component of the cytochrome c oxidase (complex IV, CIV), a multisubunit enzyme composed of a catalytic core of 3 subunits and several supernumerary subunits. The complex exists as a monomer or a dimer and forms supercomplexes (SCs) in the inner mitochondrial membrane with ubiquinol-cytochrome c oxidoreductase (cytochrome b-c1 complex, complex III, CIII).

The protein resides in the mitochondrion inner membrane. The catalysed reaction is 4 Fe(II)-[cytochrome c] + O2 + 8 H(+)(in) = 4 Fe(III)-[cytochrome c] + 2 H2O + 4 H(+)(out). Component of the cytochrome c oxidase, the last enzyme in the mitochondrial electron transport chain which drives oxidative phosphorylation. The respiratory chain contains 3 multisubunit complexes succinate dehydrogenase (complex II, CII), ubiquinol-cytochrome c oxidoreductase (cytochrome b-c1 complex, complex III, CIII) and cytochrome c oxidase (complex IV, CIV), that cooperate to transfer electrons derived from NADH and succinate to molecular oxygen, creating an electrochemical gradient over the inner membrane that drives transmembrane transport and the ATP synthase. Cytochrome c oxidase is the component of the respiratory chain that catalyzes the reduction of oxygen to water. Electrons originating from reduced cytochrome c in the intermembrane space (IMS) are transferred via the dinuclear copper A center (CU(A)) of subunit 2 and heme A of subunit 1 to the active site in subunit 1, a binuclear center (BNC) formed by heme A3 and copper B (CU(B)). The BNC reduces molecular oxygen to 2 water molecules using 4 electrons from cytochrome c in the IMS and 4 protons from the mitochondrial matrix. The chain is Cytochrome c oxidase subunit 3 (COIII) from Heterololigo bleekeri (Spear squid).